A 251-amino-acid chain; its full sequence is Zinc import ATP-binding protein ZnuC (251 aa).

The ABC transporter domain maps to 5–220 (VSLENVSVSF…PEFISMFGPR (216 aa)). 37-44 (GPNGAGKS) is a binding site for ATP.

This sequence belongs to the ABC transporter superfamily. Zinc importer (TC 3.A.1.15.5) family. In terms of assembly, the complex is composed of two ATP-binding proteins (ZnuC), two transmembrane proteins (ZnuB) and a solute-binding protein (ZnuA).

It is found in the cell inner membrane. It catalyses the reaction Zn(2+)(out) + ATP(in) + H2O(in) = Zn(2+)(in) + ADP(in) + phosphate(in) + H(+)(in). In terms of biological role, part of the ABC transporter complex ZnuABC involved in zinc import. Responsible for energy coupling to the transport system. The chain is Zinc import ATP-binding protein ZnuC from Salmonella choleraesuis (strain SC-B67).